The primary structure comprises 202 residues: Peptidyl-tRNA hydrolase (202 aa).

Position 14 (Tyr14) interacts with tRNA. The active-site Proton acceptor is the His19. Residues Phe64, Asn66, and Asn112 each contribute to the tRNA site.

The protein belongs to the PTH family. As to quaternary structure, monomer.

Its subcellular location is the cytoplasm. It carries out the reaction an N-acyl-L-alpha-aminoacyl-tRNA + H2O = an N-acyl-L-amino acid + a tRNA + H(+). In terms of biological role, hydrolyzes ribosome-free peptidyl-tRNAs (with 1 or more amino acids incorporated), which drop off the ribosome during protein synthesis, or as a result of ribosome stalling. Functionally, catalyzes the release of premature peptidyl moieties from peptidyl-tRNA molecules trapped in stalled 50S ribosomal subunits, and thus maintains levels of free tRNAs and 50S ribosomes. The protein is Peptidyl-tRNA hydrolase of Methylobacterium radiotolerans (strain ATCC 27329 / DSM 1819 / JCM 2831 / NBRC 15690 / NCIMB 10815 / 0-1).